A 230-amino-acid polypeptide reads, in one-letter code: Triggering receptor expressed on myeloid cells 1 (230 aa).

An N-terminal signal peptide occupies residues 1 to 20 (MRKAGLWGLLCVFFVSEVKA). In terms of domain architecture, Ig-like V-type spans 21–124 (AIVLEEERYD…IYHPPNDPVV (104 aa)). The Extracellular segment spans residues 21–202 (AIVLEEERYD…TDADSVSTSS (182 aa)). Residues cysteine 41 and cysteine 113 are joined by a disulfide bond. Asparagine 191 carries N-linked (GlcNAc...) asparagine glycosylation. A helical membrane pass occupies residues 203–223 (VTISVICGLLSKSLVFIILFI). The Cytoplasmic segment spans residues 224–230 (VTKRTFG).

Monomer. Homomultimer; when activated. Interacts with TYROBP/DAP12. Interacts with TLR4.

It localises to the cell membrane. Functionally, cell surface receptor that plays important roles in innate and adaptive immunity by amplifying inflammatory responses. Upon activation by various ligands such as PGLYRP1, HMGB1 or HSP70, multimerizes and forms a complex with transmembrane adapter TYROBP/DAP12. In turn, initiates a SYK-mediated cascade of tyrosine phosphorylation, activating multiple downstream mediators such as BTK, MAPK1, MAPK3 or phospholipase C-gamma. This cascade promotes the neutrophil- and macrophage-mediated release of pro-inflammatory cytokines and/or chemokines, as well as their migration and thereby amplifies inflammatory responses that are triggered by bacterial and fungal infections. By also promoting the amplification of inflammatory signals that are initially triggered by Toll-like receptor (TLR) and NOD-like receptor engagement, plays a major role in the pathophysiology of acute and chronic inflammatory diseases of different etiologies including septic shock and atherosclerosis. This chain is Triggering receptor expressed on myeloid cells 1 (Trem1), found in Mus musculus (Mouse).